We begin with the raw amino-acid sequence, 80 residues long: uncharacterized protein (80 aa).

Residues G57–I80 form a disordered region.

This is an uncharacterized protein from Bacillus subtilis (strain 168).